The following is a 456-amino-acid chain: Argininosuccinate lyase (456 aa).

The protein belongs to the lyase 1 family. Argininosuccinate lyase subfamily.

It localises to the cytoplasm. It catalyses the reaction 2-(N(omega)-L-arginino)succinate = fumarate + L-arginine. It participates in amino-acid biosynthesis; L-arginine biosynthesis; L-arginine from L-ornithine and carbamoyl phosphate: step 3/3. The sequence is that of Argininosuccinate lyase from Shewanella amazonensis (strain ATCC BAA-1098 / SB2B).